The chain runs to 200 residues: Regulator of G-protein signaling 16 (200 aa).

Residues Cys-2 and Cys-12 are each lipidated (S-palmitoyl cysteine). The RGS domain maps to 65-181; that stretch reads SFDLLLSSKN…LKSPAYRDLA (117 aa). Phosphotyrosine occurs at positions 168 and 177.

In terms of assembly, interacts with GNAI1 and GNAQ. Interacts with GNAI3, GNAI3 and GNAO1. As to quaternary structure, (Microbial infection) Interacts with porcine circovirus 2 ORF3 protein. In terms of processing, palmitoylated on Cys-2 and/or Cys-12. Phosphorylated. Phosphorylation at Tyr-168 by EGFR enhances GTPase accelerating (GAP) activity toward GNAI1.

Its subcellular location is the membrane. Regulates G protein-coupled receptor signaling cascades. Inhibits signal transduction by increasing the GTPase activity of G protein alpha subunits, thereby driving them into their inactive GDP-bound form. Plays an important role in the phototransduction cascade by regulating the lifetime and effective concentration of activated transducin alpha. May regulate extra and intracellular mitogenic signals. Its function is as follows. (Microbial infection) Gets inactivated and/or degraded by porcine circovirus 2 ORF3 protein, leading to enhanced expression of IL-6 and IL-8 in infected lymphocytes. This would explain chronic inflammatory response of PCV2 infected pigs. This chain is Regulator of G-protein signaling 16 (RGS16), found in Sus scrofa (Pig).